Consider the following 247-residue polypeptide: ATP synthase subunit a, chloroplastic (247 aa).

5 consecutive transmembrane segments (helical) span residues 38 to 58, 95 to 115, 134 to 154, 199 to 219, and 220 to 240; these read QVLITSWVVITILLGSVIIAV, VPFIGTMFLFIFVSNWSGALL, INTTVALALLTSAAYFYAGLS, LVVVVLVSLVPLVVPIPVMFL, and GLFTSGIQALIFATLAAAYIG.

Belongs to the ATPase A chain family. In terms of assembly, F-type ATPases have 2 components, CF(1) - the catalytic core - and CF(0) - the membrane proton channel. CF(1) has five subunits: alpha(3), beta(3), gamma(1), delta(1), epsilon(1). CF(0) has four main subunits: a, b, b' and c.

The protein resides in the plastid. The protein localises to the chloroplast thylakoid membrane. Key component of the proton channel; it plays a direct role in the translocation of protons across the membrane. The chain is ATP synthase subunit a, chloroplastic from Oryza nivara (Indian wild rice).